Reading from the N-terminus, the 247-residue chain is Cementoblastoma-derived protein 1 (247 aa).

The segment covering 1–28 has biased composition (polar residues); the sequence is MGTSSTDSQQAGHRRCSTSNTSAENLTC. Disordered regions lie at residues 1–52 and 147–183; these read MGTS…AGQP and EENSGRARRVPPVPRTAPVSKGEGSHPPQNSNGEKVK.

In terms of processing, phosphorylated. Post-translationally, N-glycosylated. Expressed by cementoblasts, a subpopulation of periodontal ligament cells and cells located around vessels in periodontium (at protein level).

The protein resides in the cytoplasm. Its subcellular location is the nucleus. May play a role in development of the periodontium which surrounds and supports the teeth by promoting the differentiation of multi-potent cells from the periodontal ligament into cementoblasts to form the cementum. Binds hydroxyapatite and may promote the biomineralization of the cementum. Also promotes cell proliferation. This chain is Cementoblastoma-derived protein 1, found in Homo sapiens (Human).